The following is a 622-amino-acid chain: Kinesin light chain 2 (622 aa).

The stretch at 78-143 forms a coiled coil; the sequence is ILALSSHLGA…KQHLLFMSQI (66 aa). A compositionally biased stretch (basic and acidic residues) spans 145-164; that stretch reads KLDEDASPNEEKGDVPKDTL. A disordered region spans residues 145-191; the sequence is KLDEDASPNEEKGDVPKDTLDDLFPNEDEQSPAPSPGGGDVSGQHGG. Serine 151, serine 175, and serine 179 each carry phosphoserine. Residues 180-190 show a composition bias toward gly residues; that stretch reads PGGGDVSGQHG. 5 TPR repeats span residues 198–231, 240–273, 282–315, 324–357, and 366–399; these read LRTL…LEKT, ATML…REKT, AATL…REKV, AKQL…YATR, and AKTK…AHEK. Position 445 is a phosphoserine (serine 445). One copy of the TPR 6 repeat lies at 449–482; sequence NTTLRSLGALYRRQGKLEAAHTLEDCASRNRKQG. Disordered regions lie at residues 476–548 and 563–622; these read SRNR…SFGK and KLQG…SLVG. The span at 493–509 shows a compositional bias: basic and acidic residues; it reads ELLKDGSGRRGDRRSSR. Phosphoserine is present on residues serine 508 and serine 521. Residues 538-547 show a composition bias toward low complexity; sequence GSLRRSGSFG. Residues serine 581, serine 582, serine 589, serine 608, serine 610, and serine 615 each carry the phosphoserine modification. Residues 601-622 are compositionally biased toward low complexity; that stretch reads LSDSRTLSSSSMDLSRRSSLVG.

This sequence belongs to the kinesin light chain family. In terms of assembly, oligomeric complex composed of two heavy chains and two light chains. Interacts (via TPR repeats) with PLEKHM2.

It localises to the cytoplasm. The protein resides in the cytoskeleton. Its subcellular location is the lysosome membrane. Functionally, kinesin is a microtubule-associated force-producing protein that plays a role in organelle transport. The light chain functions in coupling of cargo to the heavy chain or in the modulation of its ATPase activity. Through binding with PLEKHM2 and ARL8B, recruits kinesin-1 to lysosomes and hence direct lysosomes movement toward microtubule plus ends. This is Kinesin light chain 2 from Homo sapiens (Human).